The following is a 475-amino-acid chain: 3-hydroxyacyl-CoA dehydrogenase-like protein LAM1 (475 aa).

99–104 (GTRPFA) provides a ligand contact to NAD(+). Lys-149 lines the CoA pocket. Asn-245 is a binding site for NAD(+).

It belongs to the 3-hydroxyacyl-CoA dehydrogenase family.

It functions in the pathway mycotoxin biosynthesis. Its function is as follows. 3-hydroxyacyl-CoA dehydrogenase-like protein; part of the Tox1A locus, one of the 2 loci that mediate the biosynthesis of T-toxin, a family of linear polyketides 37 to 45 carbons in length, of which the major component is 41 carbons, and which leads to high virulence to maize. One of the PKSs (PKS1 or PKS2) could synthesize a precursor, used subsequently by the other PKS as starter unit, to add additional carbons. Variability in the length of the final carbon backbone C35-47 could be achieved by varying the number of condensation cycles, or use of different starter or extender units or might be due to decarboxylation of the penultimate product, catalyzed by DEC1. Additional proteins are required for the biosynthesis of T-toxin, including oxidoreductases RED1, RED2, RED3, LAM1 and OXI1, as well as esterase TOX9. This chain is 3-hydroxyacyl-CoA dehydrogenase-like protein LAM1, found in Cochliobolus heterostrophus (strain C4 / ATCC 48331 / race T) (Southern corn leaf blight fungus).